Reading from the N-terminus, the 372-residue chain is Aminomethyltransferase (372 aa).

The protein belongs to the GcvT family. In terms of assembly, the glycine cleavage system is composed of four proteins: P, T, L and H.

It carries out the reaction N(6)-[(R)-S(8)-aminomethyldihydrolipoyl]-L-lysyl-[protein] + (6S)-5,6,7,8-tetrahydrofolate = N(6)-[(R)-dihydrolipoyl]-L-lysyl-[protein] + (6R)-5,10-methylene-5,6,7,8-tetrahydrofolate + NH4(+). In terms of biological role, the glycine cleavage system catalyzes the degradation of glycine. The polypeptide is Aminomethyltransferase (Streptomyces avermitilis (strain ATCC 31267 / DSM 46492 / JCM 5070 / NBRC 14893 / NCIMB 12804 / NRRL 8165 / MA-4680)).